The following is a 100-amino-acid chain: MAEPDFNEIMAQAQQMQEELQRVQGEIAQSEISGSAGNGLVKVTMKGTGEVTNVTIDKSVVDPDDVDTLQDLVLGALQDANTALQSYAQEKMGPFSQALG.

Belongs to the YbaB/EbfC family. Homodimer.

Its subcellular location is the cytoplasm. The protein resides in the nucleoid. Binds to DNA and alters its conformation. May be involved in regulation of gene expression, nucleoid organization and DNA protection. This Corynebacterium kroppenstedtii (strain DSM 44385 / JCM 11950 / CIP 105744 / CCUG 35717) protein is Nucleoid-associated protein ckrop_0143.